Reading from the N-terminus, the 383-residue chain is Dual-specificity RNA methyltransferase RlmN (383 aa).

Glu95 functions as the Proton acceptor in the catalytic mechanism. In terms of domain architecture, Radical SAM core spans 101-349 (EETRGTLCVS…TTVRKTRGDD (249 aa)). The cysteines at positions 108 and 354 are disulfide-linked. The [4Fe-4S] cluster site is built by Cys115, Cys119, and Cys122. S-adenosyl-L-methionine is bound by residues 180–181 (GE), Ser212, 234–236 (SLH), and Asn311. The active-site S-methylcysteine intermediate is the Cys354.

It belongs to the radical SAM superfamily. RlmN family. It depends on [4Fe-4S] cluster as a cofactor.

The protein localises to the cytoplasm. It catalyses the reaction adenosine(2503) in 23S rRNA + 2 reduced [2Fe-2S]-[ferredoxin] + 2 S-adenosyl-L-methionine = 2-methyladenosine(2503) in 23S rRNA + 5'-deoxyadenosine + L-methionine + 2 oxidized [2Fe-2S]-[ferredoxin] + S-adenosyl-L-homocysteine. The catalysed reaction is adenosine(37) in tRNA + 2 reduced [2Fe-2S]-[ferredoxin] + 2 S-adenosyl-L-methionine = 2-methyladenosine(37) in tRNA + 5'-deoxyadenosine + L-methionine + 2 oxidized [2Fe-2S]-[ferredoxin] + S-adenosyl-L-homocysteine. In terms of biological role, specifically methylates position 2 of adenine 2503 in 23S rRNA and position 2 of adenine 37 in tRNAs. m2A2503 modification seems to play a crucial role in the proofreading step occurring at the peptidyl transferase center and thus would serve to optimize ribosomal fidelity. This Paraburkholderia xenovorans (strain LB400) protein is Dual-specificity RNA methyltransferase RlmN.